A 156-amino-acid chain; its full sequence is Transcription antitermination protein NusB (156 aa).

It belongs to the NusB family.

In terms of biological role, involved in transcription antitermination. Required for transcription of ribosomal RNA (rRNA) genes. Binds specifically to the boxA antiterminator sequence of the ribosomal RNA (rrn) operons. The chain is Transcription antitermination protein NusB from Syntrophotalea carbinolica (strain DSM 2380 / NBRC 103641 / GraBd1) (Pelobacter carbinolicus).